A 732-amino-acid polypeptide reads, in one-letter code: 1,4-alpha-glucan branching enzyme GlgB 2 (732 aa).

The Nucleophile role is filled by Asp413. The Proton donor role is filled by Glu466.

The protein belongs to the glycosyl hydrolase 13 family. GlgB subfamily. As to quaternary structure, monomer.

The catalysed reaction is Transfers a segment of a (1-&gt;4)-alpha-D-glucan chain to a primary hydroxy group in a similar glucan chain.. It participates in glycan biosynthesis; glycogen biosynthesis. In terms of biological role, catalyzes the formation of the alpha-1,6-glucosidic linkages in glycogen by scission of a 1,4-alpha-linked oligosaccharide from growing alpha-1,4-glucan chains and the subsequent attachment of the oligosaccharide to the alpha-1,6 position. The chain is 1,4-alpha-glucan branching enzyme GlgB 2 from Rhizobium etli (strain ATCC 51251 / DSM 11541 / JCM 21823 / NBRC 15573 / CFN 42).